A 421-amino-acid polypeptide reads, in one-letter code: FAD-dependent monooxygenase atnJ (421 aa).

A helical membrane pass occupies residues 9-29; the sequence is LVPLHVVIVGAGIGGLSAAVA. 2 residues coordinate FAD: Glu41 and Ala54. The active site involves Arg188. FAD is bound by residues Asp303 and Val316. The segment at 371–392 is disordered; that stretch reads RDGDAQAARDSQRKATSGTGQN.

Belongs to the paxM FAD-dependent monooxygenase family. Requires FAD as cofactor.

It localises to the membrane. It participates in secondary metabolite biosynthesis; terpenoid biosynthesis. In terms of biological role, FAD-dependent monooxygenase; part of the gene cluster that mediates the biosynthesis of the meroterpenoids arthripenoids. The pathway begins with the HR-PKS atnH that catalyzes two chain-extension steps to form a reduced triketide, which then primes the SAT domain in the NR-PKS atnG to initiate three more cycles of extension to give a linear hexaketide corresponding to the polyketide part of arthripenoids. The FAD-dependent monooxygenase atnJ then performs an oxidative decarboxylation at C11 of the atnH/atnG product, via an electrophilic aromatic hydroxylation with concomitant ipso-decarboxylation. The membrane-bound polyprenyl transferase atnF then introduces a farnesyl group before the FAD-dependent monooxygenase atnK functions as the first epoxidase on terminal C12'-C13' olefin, followed by a second epoxidation on C7'-C8' catalyzed by atnA. The terpene cyclase/mutase atnI then initiates the sequential tricyclic ring formation through protonation of the terminal epoxide and catalyzes the regioselective and stereoselective 6/6/6-tricyclic ring formation. The cytochrome P450 monooxygenase atnM is responsible for hydroxylating both C1' and C10'. The next steps may involve ketoreduction and acetyl transfer by the ketoreductase atnB and the acetyltransferase atnC, and lead to the production of arthripenoid B, the final biosynthetic product of the atn cluster. The hydroquinone moiety in arthripenoid B is prone to undergo spontaneous oxidation to afford a benzoquinone compound, a key intermediate for generating structure diversity. For instance, addition of a cysteine followed by ring contraction gives arthripenoid A, tautomerization gives the main product arthripenoid C, addition of a molecular of water or amine affords arthripenoid D or E, respectively, and loss of one water forms arthripenoid F. The chain is FAD-dependent monooxygenase atnJ from Arthrinium sp.